Consider the following 139-residue polypeptide: Large-conductance mechanosensitive channel (139 aa).

The next 2 membrane-spanning stretches (helical) occupy residues 17-37 (VVDM…VTSL) and 88-108 (TVDF…IMAA).

The protein belongs to the MscL family. In terms of assembly, homopentamer.

The protein localises to the cell inner membrane. Functionally, channel that opens in response to stretch forces in the membrane lipid bilayer. May participate in the regulation of osmotic pressure changes within the cell. The protein is Large-conductance mechanosensitive channel of Porphyromonas gingivalis (strain ATCC 33277 / DSM 20709 / CIP 103683 / JCM 12257 / NCTC 11834 / 2561).